Reading from the N-terminus, the 140-residue chain is Pro-vaccinia growth factor (140 aa).

An N-terminal signal peptide occupies residues 1-18 (MLINYLMLLFAAMIIRSF). At 19–100 (ADSGNAIETT…SEKPNTTTSY (82 aa)) the chain is on the extracellular side. Asn-34 is a glycosylation site (N-linked (GlcNAc...) asparagine; by host). Residues 41-81 (AIRLCGPEGDGYCLHGDCIHARDIDGMYCRCSHGYTGIRCQ) form the EGF-like domain. 3 cysteine pairs are disulfide-bonded: Cys-45-Cys-58, Cys-53-Cys-69, and Cys-71-Cys-80. N-linked (GlcNAc...) asparagine; by host glycosylation occurs at Asn-95. Residues 101 to 121 (IPSPGIMLVLVGIIIITCCLL) form a helical membrane-spanning segment. Topologically, residues 122–140 (SVYRFTRRTKLPLQDMVVP) are cytoplasmic.

This sequence belongs to the orthopoxvirus OPG019 family. As to quaternary structure, vaccinia growth factor interacts with host EGFR and promotes EGFR dimerization.

The protein localises to the host membrane. It is found in the secreted. In terms of biological role, stimulates cellular proliferation (hyperplasia)and mobility around infected cells to promote rapid and efficient spread of infection. This effect is beneficial for virus replication in vivo, because poxviruses replicate possibly better in proliferating cells than in quiescent cells. Acts by binding host EGFR, inducing its dimerization, autophosphorylation and leading to activation of several cellular pathways regulating cell proliferation or cell survival. The activation by host EGFR of mitogen activated protein kinases (MAPK) and extracellular-signal regulated kinases (ERK) are essential for the positive effect of vaccinia growth factor on poxvirus virulence in vivo. This is Pro-vaccinia growth factor (OPG019) from Homo sapiens (Human).